A 735-amino-acid polypeptide reads, in one-letter code: MAEPLLRKTFSRLRGREKLPRKKSDAKDRGRPAQRSEPKPPEPEPRVLEGSQAGAEVPLSPETPRSPARGAYLQSLEPSSRRWVLGGAKPPEEISLGPRTPSSGEPAGEIWYNPIPEEDPRPPAPEPVGSQLASSEPEGPILQGAAPTSPPTKTSRTKSPGPARRLSMKMKKLPELRRRLSLRSTRTSRERERTAPAGSVISRYHLDSSVATPGQASVAGGTRSPRGGYLSDGDSPERPGGPPSPTAFRPYEVGPSARAPPAALWGRLSLHLYGLGGLRPTPGATPRDLCCLLQVDGVARARTGPLRSGPDFLRLDHTFHLELEAARLLRALVLAWDPGVRRHRPCAQGTVLLPTIFRGCQAQQLAVRLEPQGLLYAKLTLSEQQEAPATVEPRVFGLPLQLLVEREQSPGQVPLIIRKCVGQIECRGLRVVGLYRLCGSAAVKKELRDAFEQDSAAVCLSEDVYPDINVITGILKDYLRELPTPLITQPLYQVVLEAMAQGHPSRASLGPEGTRGLLSCLPDVERATLTLLLDHLRLVSSFHTHNRMTPQNLAVCFGPVLLPARQTPSRTRLRGSGPGVSSAVDFKRHIEVLHYLLQSWPDTRRPSETPDVAPYLRPKRQPPLHLPLDGPEVVTRPRGRGGPESPPSNRYAGDWSVCGGDLLPRGRDFLSGPDYDHVTGSDSEEDEDESGEPRGTTDFEDEFDAPFNPHLNLKDFDALILDLERELSKQINVCL.

3 disordered regions span residues 1–253 (MAEP…PYEV), 601–655 (PDTR…AGDW), and 669–706 (FLSG…FDAP). Basic and acidic residues predominate over residues 14–47 (RGREKLPRKKSDAKDRGRPAQRSEPKPPEPEPRV). Over residues 151–160 (PTKTSRTKSP) the composition is skewed to low complexity. Residues serine 224, serine 231, serine 235, and serine 244 each carry the phosphoserine modification. The region spanning 249-366 (RPYEVGPSAR…FRGCQAQQLA (118 aa)) is the C2 domain. Residues 398 to 604 (LPLQLLVERE…YLLQSWPDTR (207 aa)) enclose the Rho-GAP domain. Over residues 669–679 (FLSGPDYDHVT) the composition is skewed to basic and acidic residues. Phosphoserine occurs at positions 681 and 683.

In terms of processing, palmitoylated. Probably palmitoylated by ZDHHC3 and ZDHHC7.

Functionally, GTPase activator for the Rho-type GTPases. As a GCM1 downstream effector, it is involved in placental development and positively regulates trophoblast cells migration. It regulates cytoskeletal remodeling by controlling the activity of Rho GTPases including RHOA, CDC42 and RAC1. This Rattus norvegicus (Rat) protein is Rho GTPase-activating protein SYDE1 (Syde1).